A 404-amino-acid polypeptide reads, in one-letter code: Rhomboid-related protein 3 (404 aa).

2 consecutive EF-hand domains span residues 34 to 69 (APED…HSSK) and 70 to 105 (LDPH…KRSN). Helical transmembrane passes span 164-184 (WFMI…GVSL), 218-238 (IFMH…LLVG), 250-270 (IGLV…VADM), 274-294 (VVGS…NIVM), 303-325 (FKLL…AVWL), 338-358 (PSFV…VVVL), and 371-391 (WWIF…WNIF). S278 functions as the Nucleophile in the catalytic mechanism. H343 is an active-site residue.

It belongs to the peptidase S54 family.

The protein localises to the membrane. The enzyme catalyses Cleaves type-1 transmembrane domains using a catalytic dyad composed of serine and histidine that are contributed by different transmembrane domains.. Its function is as follows. May be involved in regulated intramembrane proteolysis and the subsequent release of functional polypeptides from their membrane anchors. This chain is Rhomboid-related protein 3 (RHBDL3), found in Homo sapiens (Human).